A 292-amino-acid chain; its full sequence is 4-hydroxy-tetrahydrodipicolinate synthase (292 aa).

Position 50 (Thr50) interacts with pyruvate. The Proton donor/acceptor role is filled by Tyr139. The active-site Schiff-base intermediate with substrate is Lys167. Residue Ile208 coordinates pyruvate.

The protein belongs to the DapA family. Homotetramer; dimer of dimers.

It localises to the cytoplasm. It catalyses the reaction L-aspartate 4-semialdehyde + pyruvate = (2S,4S)-4-hydroxy-2,3,4,5-tetrahydrodipicolinate + H2O + H(+). It participates in amino-acid biosynthesis; L-lysine biosynthesis via DAP pathway; (S)-tetrahydrodipicolinate from L-aspartate: step 3/4. In terms of biological role, catalyzes the condensation of (S)-aspartate-beta-semialdehyde [(S)-ASA] and pyruvate to 4-hydroxy-tetrahydrodipicolinate (HTPA). The protein is 4-hydroxy-tetrahydrodipicolinate synthase of Oenococcus oeni (strain ATCC BAA-331 / PSU-1).